We begin with the raw amino-acid sequence, 37 residues long: Large ribosomal subunit protein bL36 (37 aa).

It belongs to the bacterial ribosomal protein bL36 family.

The polypeptide is Large ribosomal subunit protein bL36 (Francisella tularensis subsp. tularensis (strain FSC 198)).